Reading from the N-terminus, the 87-residue chain is Beta-defensin 109C (87 aa).

An N-terminal signal peptide occupies residues 1-22 (MRLHLLLLILLLFSILLSPVRG). 3 cysteine pairs are disulfide-bonded: cysteine 31–cysteine 59, cysteine 38–cysteine 53, and cysteine 43–cysteine 60.

It belongs to the beta-defensin family.

The protein resides in the secreted. Its function is as follows. Has antibacterial activity. This is Beta-defensin 109C (DEFB109C) from Homo sapiens (Human).